Reading from the N-terminus, the 173-residue chain is Large ribosomal subunit protein uL10 (173 aa).

It belongs to the universal ribosomal protein uL10 family. In terms of assembly, part of the ribosomal stalk of the 50S ribosomal subunit. The N-terminus interacts with L11 and the large rRNA to form the base of the stalk. The C-terminus forms an elongated spine to which L12 dimers bind in a sequential fashion forming a multimeric L10(L12)X complex.

In terms of biological role, forms part of the ribosomal stalk, playing a central role in the interaction of the ribosome with GTP-bound translation factors. The protein is Large ribosomal subunit protein uL10 of Cupriavidus necator (strain ATCC 17699 / DSM 428 / KCTC 22496 / NCIMB 10442 / H16 / Stanier 337) (Ralstonia eutropha).